A 112-amino-acid chain; its full sequence is MADPVYYQGYQDDGDIDAQKRHQALYLIGIIILIMVCIIILWVCIMLACYIPGFLKKTMEAWLSSSSMMKRRVAATITRTPFEATGPERERNWDARRQTNAASSQPSNGGVF.

Residues 27 to 47 (LIGIIILIMVCIIILWVCIML) form a helical membrane-spanning segment. The segment at 80–112 (TPFEATGPERERNWDARRQTNAASSQPSNGGVF) is disordered. Over residues 86–97 (GPERERNWDARR) the composition is skewed to basic and acidic residues. Residues 98–112 (QTNAASSQPSNGGVF) show a composition bias toward polar residues.

The protein belongs to the nanovirus movement protein family.

It is found in the host cell membrane. May transport viral genome to neighboring plant cells directly through plasmosdesmata, without any budding. The movement protein allows efficient cell to cell propagation, by bypassing the host cell wall barrier. The sequence is that of Putative movement protein (DNA-M) from Milk vetch dwarf virus (isolate N) (MDV).